The following is a 542-amino-acid chain: ATP synthase subunit alpha (542 aa).

176–183 is an ATP binding site; sequence GDRQTGKT.

This sequence belongs to the ATPase alpha/beta chains family. F-type ATPases have 2 components, CF(1) - the catalytic core - and CF(0) - the membrane proton channel. CF(1) has five subunits: alpha(3), beta(3), gamma(1), delta(1), epsilon(1). CF(0) has three main subunits: a(1), b(2) and c(9-12). The alpha and beta chains form an alternating ring which encloses part of the gamma chain. CF(1) is attached to CF(0) by a central stalk formed by the gamma and epsilon chains, while a peripheral stalk is formed by the delta and b chains.

Its subcellular location is the cell membrane. It carries out the reaction ATP + H2O + 4 H(+)(in) = ADP + phosphate + 5 H(+)(out). Functionally, produces ATP from ADP in the presence of a proton gradient across the membrane. The alpha chain is a regulatory subunit. In Tropheryma whipplei (strain TW08/27) (Whipple's bacillus), this protein is ATP synthase subunit alpha.